The following is a 292-amino-acid chain: 31 kDa ribonucleoprotein, chloroplastic (292 aa).

Residues 88–166 (LKLFVGNLPF…RAIRVNAGPA (79 aa)) enclose the RRM 1 domain. The interval 165–203 (PAPAKRENSSFGGGRGGNSSYGGGRDGNSSFGGARGGRS) is disordered. The segment at 167–207 (PAKRENSSFGGGRGGNSSYGGGRDGNSSFGGARGGRSVDSS) is linker (Gly-rich). Over residues 175–190 (FGGGRGGNSSYGGGRD) the composition is skewed to gly residues. The RRM 2 domain maps to 208 to 286 (NRVYVGNLSW…RSIRVSAAEE (79 aa)).

In terms of tissue distribution, expressed at high levels in the leaves and seedlings, and lower levels are seen in the stems and roots.

It localises to the plastid. The protein resides in the chloroplast. The protein is 31 kDa ribonucleoprotein, chloroplastic of Nicotiana plumbaginifolia (Leadwort-leaved tobacco).